The primary structure comprises 420 residues: UDP-N-acetyl-D-mannosamine dehydrogenase (420 aa).

Residues Y13, I14, D33, T85, and T126 each coordinate NAD(+). UDP-N-acetyl-alpha-D-mannosaminouronate contacts are provided by R160, V161, K212, N216, R219, H250, R252, and G263. K212 serves as the catalytic Proton donor/acceptor. Catalysis depends on C266, which acts as the Nucleophile. 2 residues coordinate UDP-N-acetyl-alpha-D-mannosaminouronate: F330 and K331. An NAD(+)-binding site is contributed by R338. K416 serves as a coordination point for UDP-N-acetyl-alpha-D-mannosaminouronate.

Belongs to the UDP-glucose/GDP-mannose dehydrogenase family. WecC subfamily. In terms of assembly, homodimer.

It carries out the reaction UDP-N-acetyl-alpha-D-mannosamine + 2 NAD(+) + H2O = UDP-N-acetyl-alpha-D-mannosaminouronate + 2 NADH + 3 H(+). It functions in the pathway bacterial outer membrane biogenesis; enterobacterial common antigen biosynthesis. Functionally, catalyzes the four-electron oxidation of UDP-N-acetyl-D-mannosamine (UDP-ManNAc), reducing NAD(+) and releasing UDP-N-acetylmannosaminuronic acid (UDP-ManNAcA). This chain is UDP-N-acetyl-D-mannosamine dehydrogenase, found in Yersinia pestis.